We begin with the raw amino-acid sequence, 160 residues long: Endoribonuclease YbeY (160 aa).

Positions 121, 125, and 131 each coordinate Zn(2+).

Belongs to the endoribonuclease YbeY family. Requires Zn(2+) as cofactor.

The protein localises to the cytoplasm. In terms of biological role, single strand-specific metallo-endoribonuclease involved in late-stage 70S ribosome quality control and in maturation of the 3' terminus of the 16S rRNA. The chain is Endoribonuclease YbeY from Hydrogenovibrio crunogenus (strain DSM 25203 / XCL-2) (Thiomicrospira crunogena).